The following is a 349-amino-acid chain: Sensory histidine kinase/phosphatase NtrB (349 aa).

The 74-residue stretch at 5–78 (TQPDAGQILN…SLEAGQGFTD (74 aa)) folds into the PAS domain. The Histidine kinase domain occupies 136–349 (GLAHEIKNPL…EFSVYLPIRK (214 aa)). At His-139 the chain carries Phosphohistidine; by autocatalysis. Lys-329 lines the ATP pocket.

In terms of processing, autophosphorylated.

It is found in the cytoplasm. The enzyme catalyses ATP + protein L-histidine = ADP + protein N-phospho-L-histidine.. Functionally, member of the two-component regulatory system NtrB/NtrC, which controls expression of the nitrogen-regulated (ntr) genes in response to nitrogen limitation. Under conditions of nitrogen limitation, NtrB autophosphorylates and transfers the phosphoryl group to NtrC. In the presence of nitrogen, acts as a phosphatase that dephosphorylates and inactivates NtrC. The polypeptide is Sensory histidine kinase/phosphatase NtrB (glnL) (Escherichia coli O157:H7).